A 420-amino-acid chain; its full sequence is Vitellogenin-3 (420 aa).

The N-terminal stretch at Met1–Ala19 is a signal peptide. A Phosphothreonine modification is found at Thr37. A phosphoserine mark is found at Ser177 and Ser178. 2 positions are modified to sulfotyrosine: Tyr384 and Tyr390. Positions Gly401 to Asn420 are disordered.

Belongs to the AB hydrolase superfamily. Lipase family. In terms of processing, tyrosine sulfation occurs in the female only and plays an essential functional role. Synthesized in the fat body and ovarian follicle cells and accumulate in the oocyte.

It localises to the secreted. Functionally, vitellogenin is the major yolk protein of eggs where it is used as a food source during embryogenesis. Vitellogenins and their receptor yl/yolkless are required for maintenance of microtubule plus-end orientation towards the posterior pole of oocytes. Involved in polarized localization of germ plasm components, such as osk mRNA and vas protein, to the oocyte posterior cortex. Receptor-mediated endocytosis by yl/yolkless is crucial for actin reorganization, mediated by osk isoform A/Long, required to anchor germ plasm components to the oocyte cortex. The sequence is that of Vitellogenin-3 (Yp3) from Drosophila melanogaster (Fruit fly).